A 276-amino-acid polypeptide reads, in one-letter code: S-adenosylmethionine-dependent nucleotide dehydratase (276 aa).

Residues 6–216 (TSVRKFRSAN…RRRHEDIGCI (211 aa)) enclose the Radical SAM core domain. Residues C22, C26, and C29 each coordinate [4Fe-4S] cluster.

The protein belongs to the radical SAM superfamily. Viperin family. The cofactor is [4Fe-4S] cluster.

The catalysed reaction is CTP + AH2 + S-adenosyl-L-methionine = 3'-deoxy-3',4'-didehydro-CTP + 5'-deoxyadenosine + L-methionine + A + H2O + H(+). Expression of pVip50 in E.coli (strain MG1655) confers resistance to phage P1; has no effect against T7. Catalyzes the conversion of cytosine triphosphate (CTP) to 3'-deoxy-3',4'-didehydro-CTP (ddhCTP), probably via a SAM-dependent radical mechanism. The modified nucleotide represses transcription from T7 RNA polymerase-directed genes (possibly by acting as chain terminators), strongly suggesting these nucleotides block viral polymerase transcription. How this protein allows bacteria to resist viruses that do not encode their own RNA polymerase (such as lambda, P1) is unknown. In Thermoplasmatales archaeon (strain ISO4-H5), this protein is S-adenosylmethionine-dependent nucleotide dehydratase.